The chain runs to 264 residues: Ion-translocating oxidoreductase complex subunit B (264 aa).

Residues 5–25 (LINSIAVLAGLGFAVGVMLVI) form a helical membrane-spanning segment. In terms of domain architecture, 4Fe-4S spans 33–92 (DSNPLIDDVASLLPGANCGGCGFAGCAACAEAIVEQGAPVNSCPVGGFEVAKQIGALLGQ). Residues Cys50, Cys53, Cys58, Cys75, Cys138, Cys142, Cys148, Cys152, Cys172, Cys175, Cys178, Cys182, Cys217, Cys220, Cys223, Cys227, Cys246, Cys249, Cys252, and Cys256 each contribute to the [4Fe-4S] cluster site. 4Fe-4S ferredoxin-type domains lie at 127–162 (VALM…MGED), 163–192 (GFPV…FARD), 207–236 (KDVK…RVTE), and 237–264 (FLAE…IELR).

The protein belongs to the 4Fe4S bacterial-type ferredoxin family. RnfB subfamily. As to quaternary structure, the Rnf complex is probably composed of eight subunits, including RnfA, RnfB, RnfC, RnfD, RnfE and RnfG. The cofactor is [4Fe-4S] cluster.

The protein resides in the cell membrane. Part of a membrane-bound complex that couples electron transfer with translocation of ions across the membrane. Catalyzes Na(+) transport, most probably coupled to electron transfer from reduced ferredoxin to methanophenazine and heterodisulfide reductase. Involved in heterodisulfide reduction during methanogenesis from acetate. The sequence is that of Ion-translocating oxidoreductase complex subunit B from Methanosarcina acetivorans (strain ATCC 35395 / DSM 2834 / JCM 12185 / C2A).